Consider the following 371-residue polypeptide: 4-hydroxy-3-methylbut-2-en-1-yl diphosphate synthase (flavodoxin) (371 aa).

Residues Cys269, Cys272, Cys304, and Glu311 each contribute to the [4Fe-4S] cluster site.

It belongs to the IspG family. It depends on [4Fe-4S] cluster as a cofactor.

It catalyses the reaction (2E)-4-hydroxy-3-methylbut-2-enyl diphosphate + oxidized [flavodoxin] + H2O + 2 H(+) = 2-C-methyl-D-erythritol 2,4-cyclic diphosphate + reduced [flavodoxin]. It functions in the pathway isoprenoid biosynthesis; isopentenyl diphosphate biosynthesis via DXP pathway; isopentenyl diphosphate from 1-deoxy-D-xylulose 5-phosphate: step 5/6. In terms of biological role, converts 2C-methyl-D-erythritol 2,4-cyclodiphosphate (ME-2,4cPP) into 1-hydroxy-2-methyl-2-(E)-butenyl 4-diphosphate. The sequence is that of 4-hydroxy-3-methylbut-2-en-1-yl diphosphate synthase (flavodoxin) from Acinetobacter baumannii (strain AB307-0294).